The sequence spans 400 residues: Large envelope protein (400 aa).

N-acetylmethionine is present on methionine 1. Disordered stretches follow at residues 1 to 64 (MGGW…GAFG), 85 to 118 (LTTV…SHPQ), and 143 to 174 (PGGS…PAPN). Glycine 2 carries the N-myristoyl glycine; by host lipid modification. The pre-S1 stretch occupies residues 2–119 (GGWSSKPRQG…PPLRDSHPQA (118 aa)). A pre-S region spans residues 2 to 174 (GGWSSKPRQG…SSRTGDPAPN (173 aa)). The Virion surface; in external conformation segment spans residues 2–181 (GGWSSKPRQG…APNMESTTSG (180 aa)). The Intravirion; in internal conformation segment spans residues 2-253 (GGWSSKPRQG…PGYRWMCLRR (252 aa)). Residue tryptophan 4 is glycosylated (N-linked (GlcNAc...) asparagine). Residues 96-106 (STNRQSGRQPT) are compositionally biased toward polar residues. The pre-S2 stretch occupies residues 120 to 174 (MQWNSTTFHQVLLDPRVRGLYFPPGGSSSGTVNPVPTTASPISSISSRTGDPAPN). The span at 155-166 (PTTASPISSISS) shows a compositional bias: low complexity. Residues 182–202 (FLGPLLVLQAGFFLLTRILTI) form a helical membrane-spanning segment. The Intravirion; in external conformation portion of the chain corresponds to 203-253 (PQSLDSWWTSLNFLGGAPTCPGQNSQSPTSNHSPTSCPPICPGYRWMCLRR). The chain crosses the membrane as a helical span at residues 254-274 (FIIFLFILLLCLIFLLVLLDY). The Virion surface portion of the chain corresponds to 275–348 (QGMLPVCPLL…GASVRFSWLS (74 aa)). An N-linked (GlcNAc...) asparagine; by host glycan is attached at asparagine 320. A helical transmembrane segment spans residues 349–369 (LLVPFVQWFVGLSPTVWLSVI). Topologically, residues 370–375 (WMMWYW) are intravirion. A helical membrane pass occupies residues 376–398 (GPSLYNILSPFLPLLPIFFCLWV). Over 399–400 (YI) the chain is Virion surface.

The protein belongs to the orthohepadnavirus major surface antigen family. As to quaternary structure, in its internal form (Li-HBsAg), interacts with the capsid protein and with the isoform S. Interacts with host chaperone CANX. In terms of assembly, associates with host chaperone CANX through its pre-S2 N glycan; this association may be essential for isoform M proper secretion. Interacts with isoform L. Interacts with the antigens of satellite virus HDV (HDVAgs); this interaction is required for encapsidation of HDV genomic RNA. In terms of processing, isoform M is N-terminally acetylated by host at a ratio of 90%, and N-glycosylated by host at the pre-S2 region. Post-translationally, myristoylated.

It is found in the virion membrane. Its function is as follows. The large envelope protein exists in two topological conformations, one which is termed 'external' or Le-HBsAg and the other 'internal' or Li-HBsAg. In its external conformation the protein attaches the virus to cell receptors and thereby initiating infection. This interaction determines the species specificity and liver tropism. This attachment induces virion internalization predominantly through caveolin-mediated endocytosis. The large envelope protein also assures fusion between virion membrane and endosomal membrane. In its internal conformation the protein plays a role in virion morphogenesis and mediates the contact with the nucleocapsid like a matrix protein. The middle envelope protein plays an important role in the budding of the virion. It is involved in the induction of budding in a nucleocapsid independent way. In this process the majority of envelope proteins bud to form subviral lipoprotein particles of 22 nm of diameter that do not contain a nucleocapsid. The chain is Large envelope protein from Homo sapiens (Human).